The following is a 953-amino-acid chain: Coatomer subunit beta (953 aa).

HEAT repeat units lie at residues aspartate 17–lysine 54, glutamine 96–glutamate 131, leucine 132–histidine 168, serine 240–threonine 276, alanine 277–histidine 314, arginine 316–valine 353, and aspartate 396–asparagine 433.

In terms of assembly, oligomeric complex that consists of at least the alpha, beta, beta', gamma, delta, epsilon and zeta subunits.

Its subcellular location is the cytoplasm. It is found in the golgi apparatus membrane. The protein localises to the cytoplasmic vesicle. It localises to the COPI-coated vesicle membrane. Functionally, the coatomer is a cytosolic protein complex that binds to dilysine motifs and reversibly associates with Golgi non-clathrin-coated vesicles, which further mediate biosynthetic protein transport from the ER, via the Golgi up to the trans Golgi network. Coatomer complex is required for budding from Golgi membranes, and is essential for the retrograde Golgi-to-ER transport of dilysine-tagged proteins. The sequence is that of Coatomer subunit beta (COPB1) from Gallus gallus (Chicken).